A 196-amino-acid polypeptide reads, in one-letter code: uncharacterized protein (196 aa).

To H.influenzae HI_0431.

This is an uncharacterized protein from Salmonella typhi.